A 153-amino-acid chain; its full sequence is Large ribosomal subunit protein uL13 (153 aa).

This sequence belongs to the universal ribosomal protein uL13 family. As to quaternary structure, part of the 50S ribosomal subunit.

Functionally, this protein is one of the early assembly proteins of the 50S ribosomal subunit, although it is not seen to bind rRNA by itself. It is important during the early stages of 50S assembly. The polypeptide is Large ribosomal subunit protein uL13 (Methylobacterium sp. (strain 4-46)).